The sequence spans 141 residues: Large ribosomal subunit protein uL13 (141 aa).

It belongs to the universal ribosomal protein uL13 family. As to quaternary structure, part of the 50S ribosomal subunit.

In terms of biological role, this protein is one of the early assembly proteins of the 50S ribosomal subunit, although it is not seen to bind rRNA by itself. It is important during the early stages of 50S assembly. This is Large ribosomal subunit protein uL13 from Sulfurovum sp. (strain NBC37-1).